The chain runs to 126 residues: Prostate and testis expressed protein 1 (126 aa).

Residues 1–21 form the signal peptide; sequence MDKSLLLELPILLCCFRALSG. Residues 46 to 125 enclose the UPAR/Ly6 domain; that stretch reads VQCRMCHLQF…CRSHDLCNED (80 aa). 4 disulfide bridges follow: Cys48/Cys75, Cys51/Cys60, Cys67/Cys94, and Cys98/Cys115.

The protein belongs to the PATE family. As to expression, expressed specifically in prostate cancer, normal prostate, and testis. Expressed in the epithelial cells of the prostate cancer and normal prostate tissues.

Its subcellular location is the secreted. This chain is Prostate and testis expressed protein 1 (PATE1), found in Homo sapiens (Human).